The sequence spans 510 residues: JmjC domain-containing histone demethylation protein 1 (510 aa).

The segment at 2 to 53 (PNRCDFCTSSSTKDKQQWTQCDGCDRWVHDVCVSITDPVSYAKYHCPTCTKT) adopts a PHD-type zinc-finger fold. Residues 216–365 (TLVRELDLVD…TQIDIAGIEV (150 aa)) enclose the JmjC domain. Thr-255 contributes to the substrate binding site. Fe cation-binding residues include His-258 and Asp-260. Lys-275 lines the substrate pocket. Residue His-333 coordinates Fe cation. Residues 475–510 (KGESKEKHKIESQLPEEKILQGSKLESKEEVQTENF) form a disordered region. Residues 477-510 (ESKEKHKIESQLPEEKILQGSKLESKEEVQTENF) show a composition bias toward basic and acidic residues.

The protein belongs to the JHDM1 histone demethylase family. Requires Fe(2+) as cofactor.

Its subcellular location is the nucleus. It carries out the reaction N(6),N(6)-dimethyl-L-lysyl(36)-[histone H3] + 2 2-oxoglutarate + 2 O2 = L-lysyl(36)-[histone H3] + 2 formaldehyde + 2 succinate + 2 CO2. Functionally, histone demethylase that specifically demethylates 'Lys-36' of histone H3, thereby playing a central role in histone code. The polypeptide is JmjC domain-containing histone demethylation protein 1 (JHD1) (Yarrowia lipolytica (strain CLIB 122 / E 150) (Yeast)).